The sequence spans 336 residues: Putative ALA-interacting subunit 4 (336 aa).

The chain crosses the membrane as a helical span at residues 36 to 56 (VILTFLVSGVVFIPLGVICLF). The N-linked (GlcNAc...) asparagine glycan is linked to N94. Positions 127–142 (RQDGQLRSPKDEHETK) are enriched in basic and acidic residues. A disordered region spans residues 127–148 (RQDGQLRSPKDEHETKSCAPED). N167 is a glycosylation site (N-linked (GlcNAc...) asparagine). The helical transmembrane segment at 290 to 310 (FLGIAYLTVGSICLFLAVSFS) threads the bilayer. Residue N329 is glycosylated (N-linked (GlcNAc...) asparagine).

Belongs to the CDC50/LEM3 family. In terms of tissue distribution, expressed in flowers. May be restricted to pollen grains.

It localises to the membrane. In Arabidopsis thaliana (Mouse-ear cress), this protein is Putative ALA-interacting subunit 4 (ALIS4).